The chain runs to 288 residues: Diaminopimelate epimerase (288 aa).

Asn-14 and Asn-67 together coordinate substrate. Catalysis depends on Cys-76, which acts as the Proton donor. Residues 77–78 (GN), Asn-166, Asn-199, and 217–218 (ER) contribute to the substrate site. Cys-226 functions as the Proton acceptor in the catalytic mechanism. A substrate-binding site is contributed by 227 to 228 (GT).

This sequence belongs to the diaminopimelate epimerase family. As to quaternary structure, homodimer.

Its subcellular location is the cytoplasm. The catalysed reaction is (2S,6S)-2,6-diaminopimelate = meso-2,6-diaminopimelate. Its pathway is amino-acid biosynthesis; L-lysine biosynthesis via DAP pathway; DL-2,6-diaminopimelate from LL-2,6-diaminopimelate: step 1/1. In terms of biological role, catalyzes the stereoinversion of LL-2,6-diaminopimelate (L,L-DAP) to meso-diaminopimelate (meso-DAP), a precursor of L-lysine and an essential component of the bacterial peptidoglycan. This chain is Diaminopimelate epimerase, found in Bacillus mycoides (strain KBAB4) (Bacillus weihenstephanensis).